A 304-amino-acid chain; its full sequence is GTPase Era (304 aa).

The 169-residue stretch at 11 to 179 (YCGFIAIVGR…QKIVRKSLRE (169 aa)) folds into the Era-type G domain. Residues 19-26 (GRPNVGKS) are G1. 19-26 (GRPNVGKS) lines the GTP pocket. The tract at residues 45–49 (QTTRH) is G2. Residues 66-69 (DTPG) form a G3 region. Residues 66–70 (DTPGL) and 128–131 (NKVD) contribute to the GTP site. Positions 128–131 (NKVD) are G4. The segment at 158-160 (ISA) is G5. In terms of domain architecture, KH type-2 spans 210 to 287 (TGEELPYSVT…HLELWVKVKA (78 aa)).

It belongs to the TRAFAC class TrmE-Era-EngA-EngB-Septin-like GTPase superfamily. Era GTPase family. As to quaternary structure, monomer.

The protein localises to the cytoplasm. Its subcellular location is the cell inner membrane. In terms of biological role, an essential GTPase that binds both GDP and GTP, with rapid nucleotide exchange. Plays a role in 16S rRNA processing and 30S ribosomal subunit biogenesis and possibly also in cell cycle regulation and energy metabolism. The protein is GTPase Era of Haemophilus ducreyi (strain 35000HP / ATCC 700724).